Consider the following 349-residue polypeptide: 6-phosphogluconolactonase (349 aa).

The tract at residues 125–151 is disordered; sequence LQSPVSEAAHTGKGPHERQEKPHTHYA. Basic and acidic residues predominate over residues 138 to 147; sequence GPHERQEKPH.

It belongs to the cycloisomerase 2 family.

The catalysed reaction is 6-phospho-D-glucono-1,5-lactone + H2O = 6-phospho-D-gluconate + H(+). The protein operates within carbohydrate degradation; pentose phosphate pathway; D-ribulose 5-phosphate from D-glucose 6-phosphate (oxidative stage): step 2/3. In terms of biological role, catalyzes the hydrolysis of 6-phosphogluconolactone to 6-phosphogluconate. The polypeptide is 6-phosphogluconolactonase (pgl) (Bacillus subtilis (strain 168)).